We begin with the raw amino-acid sequence, 425 residues long: Serine hydroxymethyltransferase (425 aa).

Residues leucine 120 and 124-126 (GHL) each bind (6S)-5,6,7,8-tetrahydrofolate. An N6-(pyridoxal phosphate)lysine modification is found at lysine 229. (6S)-5,6,7,8-tetrahydrofolate is bound at residue 353–355 (SPF).

It belongs to the SHMT family. As to quaternary structure, homodimer. It depends on pyridoxal 5'-phosphate as a cofactor.

Its subcellular location is the cytoplasm. It carries out the reaction (6R)-5,10-methylene-5,6,7,8-tetrahydrofolate + glycine + H2O = (6S)-5,6,7,8-tetrahydrofolate + L-serine. It participates in one-carbon metabolism; tetrahydrofolate interconversion. Its pathway is amino-acid biosynthesis; glycine biosynthesis; glycine from L-serine: step 1/1. Its function is as follows. Catalyzes the reversible interconversion of serine and glycine with tetrahydrofolate (THF) serving as the one-carbon carrier. This reaction serves as the major source of one-carbon groups required for the biosynthesis of purines, thymidylate, methionine, and other important biomolecules. Also exhibits THF-independent aldolase activity toward beta-hydroxyamino acids, producing glycine and aldehydes, via a retro-aldol mechanism. This chain is Serine hydroxymethyltransferase, found in Thermosynechococcus vestitus (strain NIES-2133 / IAM M-273 / BP-1).